A 262-amino-acid chain; its full sequence is Large ribosomal subunit protein eL8B (262 aa).

A disordered region spans residues 1-36; the sequence is MAPKGKKVAPAPLATKSAKSSESKNPLFESTPKNFG.

This sequence belongs to the eukaryotic ribosomal protein eL8 family. As to quaternary structure, component of the large ribosomal subunit. Mature ribosomes consist of a small (40S) and a large (60S) subunit. The 40S subunit contains about 32 different proteins and 1 molecule of RNA (18S). The 60S subunit contains 45 different proteins and 3 molecules of RNA (25S, 5.8S and 5S).

Its subcellular location is the cytoplasm. Functionally, component of the ribosome, a large ribonucleoprotein complex responsible for the synthesis of proteins in the cell. The small ribosomal subunit (SSU) binds messenger RNAs (mRNAs) and translates the encoded message by selecting cognate aminoacyl-transfer RNA (tRNA) molecules. The large subunit (LSU) contains the ribosomal catalytic site termed the peptidyl transferase center (PTC), which catalyzes the formation of peptide bonds, thereby polymerizing the amino acids delivered by tRNAs into a polypeptide chain. The nascent polypeptides leave the ribosome through a tunnel in the LSU and interact with protein factors that function in enzymatic processing, targeting, and the membrane insertion of nascent chains at the exit of the ribosomal tunnel. The chain is Large ribosomal subunit protein eL8B from Candida albicans (strain SC5314 / ATCC MYA-2876) (Yeast).